We begin with the raw amino-acid sequence, 973 residues long: Sensor histidine kinase TmoS (973 aa).

A PAS 1 domain is found at 32-103; the sequence is REELARIIFD…NQKRLVEAAS (72 aa). The PAC 1 domain maps to 108–162; sequence VRCDIEILGKSGGREVIAVDFSLLPIRDEQENIVFLLAEGRNITDKKKAEAMLAL. Positions 187–405 constitute a Histidine kinase 1 domain; that stretch reads KVSHELRTPL…LFQVKLPLNA (219 aa). At histidine 190 the chain carries Phosphohistidine; by autocatalysis. The 116-residue stretch at 452–567 folds into the Response regulatory domain; sequence RVLIVEDNPD…ELRARVSNLI (116 aa). The residue at position 500 (aspartate 500) is a 4-aspartylphosphate. In terms of domain architecture, PAS 2 spans 611 to 681; that stretch reads SEARWKAVYE…QRLARLLQSG (71 aa). Positions 685-737 constitute a PAC 2 domain; the sequence is YSVECSYLCKNGSTIWANASVSLMSPRVDEPQVILQIIDDITEKKQAQETLNQ. Residues 757 to 973 enclose the Histidine kinase 2 domain; the sequence is YIAHEINQPL…ACFFVSIPVS (217 aa). Histidine 760 carries the phosphohistidine modification.

Autophosphorylated. Activation requires a sequential transfer of a phosphate group from a His in the primary transmitter domain, to an Asp in the receiver domain and to a His in the secondary transmitter domain.

The protein resides in the cytoplasm. It catalyses the reaction ATP + protein L-histidine = ADP + protein N-phospho-L-histidine.. With respect to regulation, activity is regulated by agonists and antagonists. Binding of agonists such as toluene or benzene to TmoS stimulates autophosphorylation. Toluene causes the most pronounced increase, followed by benzene, chlorobenzene and ethylbenzene. Activity is inhibited by antagonists such as o-xylene, o-chlorotoluene and trimethylbenzene isomers, which bind to TmoS but do not stimulate autophosphorylation. Its function is as follows. Member of the two-component regulatory system TmoS/TmoT involved in the regulation of toluene degradation. Probably phosphorylates TmoT via a four-step phosphorelay in response to toluene. Can also be induced by benzene and ethylbenzene. The polypeptide is Sensor histidine kinase TmoS (tmoS) (Ectopseudomonas mendocina (Pseudomonas mendocina)).